A 129-amino-acid chain; its full sequence is Large ribosomal subunit protein bL32m (129 aa).

Residues 1-63 (MAAMTAAAAA…LEDIWEGILR (63 aa)) constitute a mitochondrion transit peptide. Residues C94, C97, C107, and C110 each contribute to the Zn(2+) site.

This sequence belongs to the bacterial ribosomal protein bL32 family. In terms of assembly, component of the mitochondrial large ribosomal subunit (mt-LSU). Mature N.crassa 74S mitochondrial ribosomes consist of a small (37S) and a large (54S) subunit. The 37S small subunit contains a 16S ribosomal RNA (16S mt-rRNA) and 32 different proteins. The 54S large subunit contains a 23S rRNA (23S mt-rRNA) and 42 different proteins. bL32m has a zinc binding site. Post-translationally, MRPL32 precursor is processed by the m-AAA protease (composed of YTA12/RCA1 and YTA10/AFG3), which cleaves the N-terminal transit peptide. Cleavage by the m-AAA protease takes place prior to assembly into the large subunit, an essential step for mitochondrial ribosome (mitoribosome) assembly. Proper processing by the m-AAA protease is dependent on the zinc-binding region within the tightly folded C-terminal domain of MRPL32: zinc-dependent folding halts degradation initiated from the N-terminus and triggers the release of mature MRPL32.

It is found in the mitochondrion. Its function is as follows. Component of the mitochondrial ribosome (mitoribosome), a dedicated translation machinery responsible for the synthesis of mitochondrial genome-encoded proteins, including at least some of the essential transmembrane subunits of the mitochondrial respiratory chain. The mitoribosomes are attached to the mitochondrial inner membrane and translation products are cotranslationally integrated into the membrane. The sequence is that of Large ribosomal subunit protein bL32m (mrpl32) from Neurospora crassa (strain ATCC 24698 / 74-OR23-1A / CBS 708.71 / DSM 1257 / FGSC 987).